We begin with the raw amino-acid sequence, 305 residues long: RxLR effector protein PexRD25 (305 aa).

The N-terminal stretch at 1-16 (MRFLFYMLLACSAVVA) is a signal peptide. The RxLR-dEER motif lies at 44-56 (RLLRDRRSVDEER).

The protein belongs to the RxLR effector family.

The protein resides in the secreted. The protein localises to the host nucleus. Its subcellular location is the host nucleolus. Functionally, effector that enhances P.infestans colonization of Nicotiana benthamiana leaves. In Phytophthora infestans (strain T30-4) (Potato late blight agent), this protein is RxLR effector protein PexRD25.